The chain runs to 248 residues: Large ribosomal subunit protein uL29m (248 aa).

2 disordered regions span residues 77–107 (VSKY…GFFG) and 223–248 (AYEP…PPSS).

The protein belongs to the universal ribosomal protein uL29 family. As to quaternary structure, component of the mitochondrial large ribosomal subunit. Mature mitochondrial ribosomes consist of a small (37S) and a large (54S) subunit. The 37S subunit contains at least 33 different proteins and 1 molecule of RNA (15S). The 54S subunit contains at least 45 different proteins and 1 molecule of RNA (21S).

It is found in the mitochondrion. This chain is Large ribosomal subunit protein uL29m (MRPL4), found in Ajellomyces capsulatus (strain NAm1 / WU24) (Darling's disease fungus).